Reading from the N-terminus, the 619-residue chain is uncharacterized protein (619 aa).

An N-terminal signal peptide occupies residues 1–21 (MKKLIAIIAVAAVVIAGFVFT).

This is an uncharacterized protein from Archaeoglobus fulgidus (strain ATCC 49558 / DSM 4304 / JCM 9628 / NBRC 100126 / VC-16).